Here is a 610-residue protein sequence, read N- to C-terminus: UvrABC system protein C (610 aa).

One can recognise a GIY-YIG domain in the interval 13–91 (HLPGVYRMYD…IKENQPKYNV (79 aa)). Positions 201–236 (GQVVEHLVQKMENAAQELDFEAAARFRDQIQSVRAV) constitute a UVR domain.

It belongs to the UvrC family. As to quaternary structure, interacts with UvrB in an incision complex.

It localises to the cytoplasm. In terms of biological role, the UvrABC repair system catalyzes the recognition and processing of DNA lesions. UvrC both incises the 5' and 3' sides of the lesion. The N-terminal half is responsible for the 3' incision and the C-terminal half is responsible for the 5' incision. The sequence is that of UvrABC system protein C from Actinobacillus pleuropneumoniae serotype 5b (strain L20).